The primary structure comprises 175 residues: Auxin-responsive protein IAA28 (175 aa).

The segment at 1-39 is disordered; sequence MEEEKRLELRLAPPCHQFTSNNNINGSKQKSSTKETSFL. Positions 7-11 match the EAR-like (transcriptional repression) motif; sequence LELRL. Residues 17–39 are compositionally biased toward polar residues; sequence QFTSNNNINGSKQKSSTKETSFL. The region spanning 80-161 is the PB1 domain; sequence ELYVKINMEG…TVKRLHVLKT (82 aa).

It belongs to the Aux/IAA family. As to quaternary structure, homodimers and heterodimers. Interacts with TPL. In terms of tissue distribution, in roots and inflorescence stems.

The protein resides in the nucleus. Its function is as follows. Aux/IAA proteins are short-lived transcriptional factors that function as repressors of early auxin response genes at low auxin concentrations. Repression is thought to result from the interaction with auxin response factors (ARFs), proteins that bind to the auxin-responsive promoter element (AuxRE). Formation of heterodimers with ARF proteins may alter their ability to modulate early auxin response genes expression. This Arabidopsis thaliana (Mouse-ear cress) protein is Auxin-responsive protein IAA28 (IAA28).